The chain runs to 270 residues: ATP synthase subunit a (270 aa).

The next 5 helical transmembrane spans lie at 37–57 (NVHIDSLFFSVLTGMLFLWVF), 98–118 (VAPLALTIFCWVILMNLMDLI), 143–163 (DVNITMAMALGVFALMIYYSI), 217–237 (VVFILIAAMLPWYLQWVGALP), and 239–259 (AIFHILVILIQAFVFMMLTIV).

This sequence belongs to the ATPase A chain family. As to quaternary structure, F-type ATPases have 2 components, CF(1) - the catalytic core - and CF(0) - the membrane proton channel. CF(1) has five subunits: alpha(3), beta(3), gamma(1), delta(1), epsilon(1). CF(0) has three main subunits: a(1), b(2) and c(9-12). The alpha and beta chains form an alternating ring which encloses part of the gamma chain. CF(1) is attached to CF(0) by a central stalk formed by the gamma and epsilon chains, while a peripheral stalk is formed by the delta and b chains.

The protein resides in the cell inner membrane. Functionally, key component of the proton channel; it plays a direct role in the translocation of protons across the membrane. The sequence is that of ATP synthase subunit a from Aliivibrio salmonicida (strain LFI1238) (Vibrio salmonicida (strain LFI1238)).